Reading from the N-terminus, the 28-residue chain is Cytochrome b6-f complex subunit 6 (28 aa).

A helical transmembrane segment spans residues 2–22 (VEYLVILSGMFGLALACFFGL).

The protein belongs to the PetL family. The 4 large subunits of the cytochrome b6-f complex are cytochrome b6, subunit IV (17 kDa polypeptide, PetD), cytochrome f and the Rieske protein, while the 4 small subunits are PetG, PetL, PetM and PetN. The complex functions as a dimer.

The protein resides in the plastid. It localises to the cyanelle thylakoid membrane. Its function is as follows. Component of the cytochrome b6-f complex, which mediates electron transfer between photosystem II (PSII) and photosystem I (PSI), cyclic electron flow around PSI, and state transitions. PetL is important for photoautotrophic growth as well as for electron transfer efficiency and stability of the cytochrome b6-f complex. The protein is Cytochrome b6-f complex subunit 6 of Cyanophora paradoxa.